Consider the following 357-residue polypeptide: Palmitoyltransferase ZDHHC20-A (357 aa).

Over 1 to 14 (MAPSHAVRCCQRGL) the chain is Cytoplasmic. Residues 15–35 (SWIPVIFINLVVCWSYYAYVV) traverse the membrane as a helical segment. Residues 36–50 (ELCIYTIPNVNEQVI) lie on the Lumenal side of the membrane. A helical transmembrane segment spans residues 51 to 71 (YLVVFHAFFFMFMWSYWKTIS). Residues 72-166 (SKPTNPSKEF…NNCVGFSNYK (95 aa)) lie on the Cytoplasmic side of the membrane. A DHHC domain is found at 123–173 (RYCDRCQLIKPDRCHHCSTCDKCVLKMDHHCPWVNNCVGFSNYKFFVLFLA). The active-site S-palmitoyl cysteine intermediate is the Cys153. A helical membrane pass occupies residues 167–187 (FFVLFLAYSMLYCVYIAATVL). The Lumenal portion of the chain corresponds to 188–204 (QYFIKFWTNQLPDTHAK). A helical transmembrane segment spans residues 205 to 228 (FHVLFLFFVAAMFFISILSLFSYH). Over 229 to 357 (LWLVGKNRTT…PVCVTLENES (129 aa)) the chain is Cytoplasmic.

It belongs to the DHHC palmitoyltransferase family.

The protein localises to the golgi apparatus membrane. The protein resides in the cell membrane. It is found in the cytoplasm. Its subcellular location is the perinuclear region. It localises to the endoplasmic reticulum membrane. The protein localises to the endoplasmic reticulum-Golgi intermediate compartment membrane. It catalyses the reaction L-cysteinyl-[protein] + hexadecanoyl-CoA = S-hexadecanoyl-L-cysteinyl-[protein] + CoA. It carries out the reaction L-cysteinyl-[protein] + tetradecanoyl-CoA = S-tetradecanoyl-L-cysteinyl-[protein] + CoA. The catalysed reaction is L-cysteinyl-[protein] + octadecanoyl-CoA = S-octadecanoyl-L-cysteinyl-[protein] + CoA. In terms of biological role, palmitoyltransferase that could catalyze the addition of palmitate onto various protein substrates. Catalyzes palmitoylation of Cys residues on protein substrates and has a preference for acyl-CoA with C16 fatty acid chains but may also utilize acyl-CoA with C14 and C18 fatty acid chains. The chain is Palmitoyltransferase ZDHHC20-A from Danio rerio (Zebrafish).